We begin with the raw amino-acid sequence, 103 residues long: Acyl carrier protein homolog (103 aa).

A Carrier domain is found at 3-87; the sequence is ELTSEIKKEI…ETLEKVVQTT (85 aa). O-(pantetheine 4'-phosphoryl)serine is present on Ser-45.

In terms of processing, 4'-phosphopantetheine is transferred from CoA to a specific serine of the apo-ACP-like protein.

It is found in the cytoplasm. Acyl carrier protein. This chain is Acyl carrier protein homolog, found in Clostridium acetobutylicum (strain ATCC 824 / DSM 792 / JCM 1419 / IAM 19013 / LMG 5710 / NBRC 13948 / NRRL B-527 / VKM B-1787 / 2291 / W).